The primary structure comprises 195 residues: Putative NADH dehydrogenase/NAD(P)H nitroreductase Bcep18194_B1060 (195 aa).

It belongs to the nitroreductase family. HadB/RutE subfamily. The cofactor is FMN.

This chain is Putative NADH dehydrogenase/NAD(P)H nitroreductase Bcep18194_B1060, found in Burkholderia lata (strain ATCC 17760 / DSM 23089 / LMG 22485 / NCIMB 9086 / R18194 / 383).